The following is a 201-amino-acid chain: uncharacterized protein (201 aa).

The disordered stretch occupies residues 121 to 141; it reads HHRTRPGRGPGPRPGGSAMAG.

This is an uncharacterized protein from Mycobacterium tuberculosis (strain ATCC 25618 / H37Rv).